We begin with the raw amino-acid sequence, 179 residues long: Lebocin-1/2 (179 aa).

A signal peptide spans 1–16; it reads MYKFLVFSSVLVLFFA. Residues 17-120 constitute a propeptide that is removed on maturation; it reads QASCQRFIQP…QPIESHRNTR (104 aa). A disordered region spans residues 93 to 116; it reads NNEASIEHSHHTVDTGLDQPIESH. An O-linked (GalNAc...) threonine glycan is attached at Thr135. Residues 153-179 constitute a propeptide that is removed on maturation; that stretch reads RRHASDDQEELRQYNEHFLIPRDIFQE.

This sequence belongs to the lebocin family. Post-translationally, O-glycosylation is important for the antibacterial activity of lebocin, O-linked glycan structure is a disaccharide (Gal-GalNAc) in case of lebocin 1 and a monosaccharide (GalNAc) in case of lebocin 2. In terms of tissue distribution, hemolymph. Produced in fat body.

It localises to the secreted. In terms of biological role, antibacterial peptide. This is Lebocin-1/2 from Bombyx mori (Silk moth).